Here is a 157-residue protein sequence, read N- to C-terminus: MSETERTLVIIKPDAVVRGLIGEIISRFEKKGLKIVGMKMIWIDRELAEKHYEEHREKPFFKALIDYITKTPVVVMVLEGRYAVEVVRKMAGATDPKDAAPGTIRGDFGLEVSDAICNVIHASDSKESAEREISLFFKPEELFEYPRAADWFYKKGI.

The ATP site is built by K12, F60, R88, T94, and R105. H121 functions as the Pros-phosphohistidine intermediate in the catalytic mechanism.

Belongs to the NDK family. Requires Mg(2+) as cofactor.

Its subcellular location is the cytoplasm. The catalysed reaction is a 2'-deoxyribonucleoside 5'-diphosphate + ATP = a 2'-deoxyribonucleoside 5'-triphosphate + ADP. The enzyme catalyses a ribonucleoside 5'-diphosphate + ATP = a ribonucleoside 5'-triphosphate + ADP. In terms of biological role, major role in the synthesis of nucleoside triphosphates other than ATP. The ATP gamma phosphate is transferred to the NDP beta phosphate via a ping-pong mechanism, using a phosphorylated active-site intermediate. The protein is Nucleoside diphosphate kinase of Pyrococcus horikoshii (strain ATCC 700860 / DSM 12428 / JCM 9974 / NBRC 100139 / OT-3).